Here is a 424-residue protein sequence, read N- to C-terminus: MAKNIQAIRGMNDYLPGETAIWQRIEGTLKNVLGSYGYSEIRLPIVEQTPLFKRAIGEVTDVVEKEMYTFEDRNGDSLTLRPEGTAGCVRAGIEHGLLYNQEQRLWYIGPMFRHERPQKGRYRQFHQLGCEVFGLQGPDIDAELIMLTARWWRALGISEHVTLELNSIGSLEARANYRDALVAFLEQHKEKLDEDCKRRMYTNPLRVLDSKNPEVQALLNDAPVLGDYLDEESREHFAGLCKLLESAGIAYTVNQRLVRGLDYYNRTVFEWVTNSLGSQGTVCAGGRYDGLVEQLGGRATPAVGFAMGLERLVLLVQAVNPEFKADPVVDIYLVASGADTQSAAMALAERLRDELPGVKLMTNHGGGNFKKQFARADKWGARVAVVLGESEVANGTAVVKDLRSGEQTAVAQDSVAAHLRTLLG.

This sequence belongs to the class-II aminoacyl-tRNA synthetase family. In terms of assembly, homodimer.

The protein localises to the cytoplasm. It catalyses the reaction tRNA(His) + L-histidine + ATP = L-histidyl-tRNA(His) + AMP + diphosphate + H(+). The chain is Histidine--tRNA ligase from Escherichia coli O17:K52:H18 (strain UMN026 / ExPEC).